Here is a 372-residue protein sequence, read N- to C-terminus: Flagellar P-ring protein (372 aa).

Residues 1 to 29 form the signal peptide; that stretch reads MPARPIPVPAFALALALAAALAVPAPAAA.

It belongs to the FlgI family. The basal body constitutes a major portion of the flagellar organelle and consists of four rings (L,P,S, and M) mounted on a central rod.

It is found in the periplasm. The protein resides in the bacterial flagellum basal body. In terms of biological role, assembles around the rod to form the L-ring and probably protects the motor/basal body from shearing forces during rotation. This chain is Flagellar P-ring protein, found in Anaeromyxobacter dehalogenans (strain 2CP-1 / ATCC BAA-258).